The sequence spans 563 residues: Dihydroxy-acid dehydratase (563 aa).

Aspartate 78 is a Mg(2+) binding site. Cysteine 119 provides a ligand contact to [2Fe-2S] cluster. Residues aspartate 120 and lysine 121 each contribute to the Mg(2+) site. Lysine 121 is modified (N6-carboxylysine). Residue cysteine 191 coordinates [2Fe-2S] cluster. Glutamate 442 is a binding site for Mg(2+). Serine 468 acts as the Proton acceptor in catalysis.

Belongs to the IlvD/Edd family. As to quaternary structure, homodimer. It depends on [2Fe-2S] cluster as a cofactor. Mg(2+) serves as cofactor.

The enzyme catalyses (2R)-2,3-dihydroxy-3-methylbutanoate = 3-methyl-2-oxobutanoate + H2O. It carries out the reaction (2R,3R)-2,3-dihydroxy-3-methylpentanoate = (S)-3-methyl-2-oxopentanoate + H2O. It functions in the pathway amino-acid biosynthesis; L-isoleucine biosynthesis; L-isoleucine from 2-oxobutanoate: step 3/4. The protein operates within amino-acid biosynthesis; L-valine biosynthesis; L-valine from pyruvate: step 3/4. Functions in the biosynthesis of branched-chain amino acids. Catalyzes the dehydration of (2R,3R)-2,3-dihydroxy-3-methylpentanoate (2,3-dihydroxy-3-methylvalerate) into 2-oxo-3-methylpentanoate (2-oxo-3-methylvalerate) and of (2R)-2,3-dihydroxy-3-methylbutanoate (2,3-dihydroxyisovalerate) into 2-oxo-3-methylbutanoate (2-oxoisovalerate), the penultimate precursor to L-isoleucine and L-valine, respectively. This is Dihydroxy-acid dehydratase from Desulfitobacterium hafniense (strain DSM 10664 / DCB-2).